The chain runs to 229 residues: Uracil-DNA glycosylase (229 aa).

Asp-70 functions as the Proton acceptor in the catalytic mechanism.

Belongs to the uracil-DNA glycosylase (UDG) superfamily. UNG family.

The protein localises to the cytoplasm. The catalysed reaction is Hydrolyzes single-stranded DNA or mismatched double-stranded DNA and polynucleotides, releasing free uracil.. Functionally, excises uracil residues from the DNA which can arise as a result of misincorporation of dUMP residues by DNA polymerase or due to deamination of cytosine. This Chlamydia felis (strain Fe/C-56) (Chlamydophila felis) protein is Uracil-DNA glycosylase.